The primary structure comprises 164 residues: V-type proton ATPase subunit c' (164 aa).

The Vacuolar portion of the chain corresponds to 1–14 (MSTQLASNIYAPLY). A helical membrane pass occupies residues 15 to 37 (APFFGFAGCAAAMVLSCLGAAIG). Residues 38–59 (TAKSGIGIAGIGTFKPELIMKS) are Cytoplasmic-facing. Residues 60–80 (LIPVVMSGILAIYGLVVAVLI) form a helical membrane-spanning segment. At 81-98 (AGNLSPTEDYTLFNGFMH) the chain is on the vacuolar side. A helical membrane pass occupies residues 99 to 120 (LSCGLCVGFACLSSGYAIGMVG). Over 121 to 132 (DVGVRKYMHQPR) the chain is Cytoplasmic. Residues 133 to 158 (LFVGIVLILIFSEVLGLYGMIVALIL) form a helical membrane-spanning segment. The Vacuolar portion of the chain corresponds to 159–164 (NTRGSE).

It belongs to the V-ATPase proteolipid subunit family. V-ATPase is a heteromultimeric enzyme composed of a peripheral catalytic V1 complex (components A to H) attached to an integral membrane V0 proton pore complex (components: a, c, c', c'', d, e, f and VOA1). The decameric c-ring forms the proton-conducting pore, and is composed of eight proteolipid subunits c, one subunit c' and one subunit c''.

Its subcellular location is the vacuole membrane. Functionally, proton-conducting pore forming subunit of the V0 complex of vacuolar(H+)-ATPase (V-ATPase), a multisubunit enzyme composed of a peripheral complex (V1) that hydrolyzes ATP and a membrane integral complex (V0) that translocates protons. V-ATPase is responsible for acidifying and maintaining the pH of intracellular compartments. The polypeptide is V-type proton ATPase subunit c' (VMA11) (Saccharomyces cerevisiae (strain ATCC 204508 / S288c) (Baker's yeast)).